The primary structure comprises 276 residues: ARL14 effector protein (276 aa).

Positions 158–177 are disordered; that stretch reads KQTEFAPEGGKREKRKLTKA. Residue K176 forms a Glycyl lysine isopeptide (Lys-Gly) (interchain with G-Cter in SUMO2) linkage. Residues S182 and S266 each carry the phosphoserine modification.

Interacts with ARL14 and MYO1E.

Its subcellular location is the cytoplasm. In terms of biological role, through its interaction with ARL14 and MYO1E, may connect MHC class II-containing cytoplasmic vesicles to the actin network and hence controls the movement of these vesicles along the actin cytoskeleton in dendritic cells. The sequence is that of ARL14 effector protein (Arl14ep) from Mus musculus (Mouse).